Here is a 504-residue protein sequence, read N- to C-terminus: UDP-N-acetylmuramoylalanine--D-glutamate ligase (504 aa).

129 to 135 (GTNGKTT) lines the ATP pocket.

Belongs to the MurCDEF family.

Its subcellular location is the cytoplasm. The enzyme catalyses UDP-N-acetyl-alpha-D-muramoyl-L-alanine + D-glutamate + ATP = UDP-N-acetyl-alpha-D-muramoyl-L-alanyl-D-glutamate + ADP + phosphate + H(+). It functions in the pathway cell wall biogenesis; peptidoglycan biosynthesis. Cell wall formation. Catalyzes the addition of glutamate to the nucleotide precursor UDP-N-acetylmuramoyl-L-alanine (UMA). The polypeptide is UDP-N-acetylmuramoylalanine--D-glutamate ligase (Burkholderia mallei (strain NCTC 10247)).